The following is a 272-amino-acid chain: Tryptophan synthase alpha chain (272 aa).

Active-site proton acceptor residues include Glu49 and Asp60.

Belongs to the TrpA family. Tetramer of two alpha and two beta chains.

It catalyses the reaction (1S,2R)-1-C-(indol-3-yl)glycerol 3-phosphate + L-serine = D-glyceraldehyde 3-phosphate + L-tryptophan + H2O. It functions in the pathway amino-acid biosynthesis; L-tryptophan biosynthesis; L-tryptophan from chorismate: step 5/5. The alpha subunit is responsible for the aldol cleavage of indoleglycerol phosphate to indole and glyceraldehyde 3-phosphate. This chain is Tryptophan synthase alpha chain, found in Polaromonas sp. (strain JS666 / ATCC BAA-500).